The following is a 710-amino-acid chain: Iron-sulfur clusters transporter ATM1, mitochondrial (710 aa).

A mitochondrion-targeting transit peptide spans 1–38 (MWLSLPRSGYGSVATLTSKRVLACLTPLRQFSTSPAVS). A compositionally biased stretch (polar residues) spans 35 to 52 (PAVSNANHKNVDNINKSP). The tract at residues 35 to 83 (PAVSNANHKNVDNINKSPANDAANNAVEKGDKPTTSPEKLATKAEKSSA) is disordered. Residues 39-129 (NANHKNVDNI…PKGKTSVKFR (91 aa)) lie on the Mitochondrial matrix side of the membrane. A helical transmembrane segment spans residues 130–151 (VLVAVALLVGAKLLNVQVPFFF). Positions 130 to 419 (VLVAVALLVG…LGSVYRDLRQ (290 aa)) constitute an ABC transmembrane type-1 domain. Over 152 to 173 (KEIIDDMNIEWNSATALGVGIT) the chain is Mitochondrial intermembrane. A helical transmembrane segment spans residues 174–197 (ALIFSYGAARFGAVLFGELRNAIF). The Mitochondrial matrix portion of the chain corresponds to 198–246 (ASVAQKAIKEVATNVFRHLLKLDMAFHLSRQTGGITRAIDRGTKGISFV). Residues 247–270 (LSSMVFHIIPIALEISLVCGILSY) traverse the membrane as a helical segment. Asn271 is a topological domain (mitochondrial intermembrane). The helical transmembrane segment at 272–292 (FGWKYALVTGATMVSYAIFTI) threads the bilayer. The Mitochondrial matrix portion of the chain corresponds to 293-358 (TTTSWRTKFR…ASIKIATSLA (66 aa)). Glutathione-binding positions include 298 to 302 (RTKFR) and 361 to 364 (NSGQ). A helical membrane pass occupies residues 359-377 (FLNSGQNLIFSSALTAMMY). The Mitochondrial intermembrane portion of the chain corresponds to 378-392 (MTCCGVADGSLTVGD). The chain crosses the membrane as a helical span at residues 393-414 (LVLVNQLVFQLSVPLNFLGSVY). A glutathione-binding site is contributed by Gly411. The Mitochondrial matrix portion of the chain corresponds to 415–710 (RDLRQSLLDM…AEEKAAKKDV (296 aa)). One can recognise an ABC transporter domain in the interval 453 to 687 (IRFENVTYGY…DGLYKSMWDA (235 aa)). ATP is bound by residues Tyr462 and 486–497 (GPSGSGKSTILK).

The protein belongs to the ABC transporter superfamily. ABCB family. Heavy Metal importer (TC 3.A.1.210) subfamily. In terms of assembly, homodimer.

The protein localises to the mitochondrion inner membrane. Its function is as follows. Performs an essential function in the generation of cytoplasmic iron-sulfur proteins by mediating the ATP-dependent export of Fe/S cluster precursors synthesized by NFS1 and other mitochondrial proteins. Hydrolyzes ATP. Binds glutathione and may function by transporting a glutathione-conjugated iron-sulfur compound. The polypeptide is Iron-sulfur clusters transporter ATM1, mitochondrial (Yarrowia lipolytica (strain CLIB 122 / E 150) (Yeast)).